The primary structure comprises 331 residues: MTYELSTDREFDLIAIGRACIDLNAVEYNRPMEETMTFSKYVGGSPANIVIGSSKLGLKAGFIGKIADDQHGRFIESYMRGVGVDTSNLVVDQEGHKTGLAFTEIKSPEECSILMYRQDVADLYLSPEEVNEAYIRRSKLLLVSGTALSKSPSREAVLKAIRLAKRNDVKVVFELDYRPYSWETPEETAVYYSLVAEQSDIVIGTREEFDVLENRTEKGDNDETIRYLFKHSPELIVIKHGVEGSFAYTKAGEAYRGYAYKTKVLKTFGAGDSYASAFLYALISGKGIETALKYGSASASIVVSKHSSSDAMPSVEEIEALIEKDETITIA.

It belongs to the carbohydrate kinase PfkB family.

The enzyme catalyses 5-dehydro-2-deoxy-D-gluconate + ATP = 6-phospho-5-dehydro-2-deoxy-D-gluconate + ADP + H(+). It participates in polyol metabolism; myo-inositol degradation into acetyl-CoA; acetyl-CoA from myo-inositol: step 5/7. In terms of biological role, catalyzes the phosphorylation of 5-dehydro-2-deoxy-D-gluconate (2-deoxy-5-keto-D-gluconate or DKG) to 6-phospho-5-dehydro-2-deoxy-D-gluconate (DKGP). In Halalkalibacterium halodurans (strain ATCC BAA-125 / DSM 18197 / FERM 7344 / JCM 9153 / C-125) (Bacillus halodurans), this protein is 5-dehydro-2-deoxygluconokinase.